Here is an 89-residue protein sequence, read N- to C-terminus: Small ribosomal subunit protein uS15 (89 aa).

Positions 1-20 (MSITQERKSALIAEHARGKT) are enriched in basic and acidic residues. Residues 1–24 (MSITQERKSALIAEHARGKTDTGS) form a disordered region.

The protein belongs to the universal ribosomal protein uS15 family. In terms of assembly, part of the 30S ribosomal subunit. Forms a bridge to the 50S subunit in the 70S ribosome, contacting the 23S rRNA.

In terms of biological role, one of the primary rRNA binding proteins, it binds directly to 16S rRNA where it helps nucleate assembly of the platform of the 30S subunit by binding and bridging several RNA helices of the 16S rRNA. Its function is as follows. Forms an intersubunit bridge (bridge B4) with the 23S rRNA of the 50S subunit in the ribosome. The protein is Small ribosomal subunit protein uS15 of Maricaulis maris (strain MCS10) (Caulobacter maris).